The chain runs to 471 residues: MSTDTGVSVRVRGIYSTALTKLFLDRGFRISQPSQKIAERLGIEKTYDEFDVDIYDKRDHHGVILVGTEVEKVKEVFEEEFIDVLFRKLPYQLYGIYKGLVIKRDERYVYVDIGNAIGTIPVEEGKNLHEGDEVLVQVKKHNLLPHLSTMLTIPGDYAVLIPKPVGVQRHVKISRKIRDSSERERLRILGLSIDMGEWGILWRTAAAYKDWNTLRDEIIRLSKIADRLKEAEKKSAPEQIVEGRNIYEVEFGGGAKKKLDEIRNRVVPTVEGHHMLKAYDVEFSFAVEIAEGILAKVPGQRIKVNQGFWEALLDSKGPKKGWLFFLEHNKPDGQRYKLGPGEIVEVTFNPLRITLRRNLKPGKFYDGLDLPIEFGDYAITEIEAGKWWFVHRYYDRNGNLKGEYYNINTPVEIYPDRARYIDLEIDIVKWPDGEKEIIDKDKLREHYEDGIISEKLYKAVLRITQEVYERI.

Belongs to the FAU-1 family.

Probable RNase involved in rRNA stability through maturation and/or degradation of precursor rRNAs. Binds to RNA in loop regions with AU-rich sequences. This Thermococcus gammatolerans (strain DSM 15229 / JCM 11827 / EJ3) protein is Probable ribonuclease FAU-1.